Here is an 81-residue protein sequence, read N- to C-terminus: Trefoil factor 3 (81 aa).

Residues 1-22 (METRALWLMLLVVLVAGSSGIA) form the signal peptide. One can recognise a P-type domain in the interval 31 to 74 (SQCMVPANVRVDCGYPSVTSEQCNNRGCCFDSSIPNVPWCFKPL). 3 disulfides stabilise this stretch: C33-C59, C43-C58, and C53-C70.

As to quaternary structure, monomer. Homodimer; disulfide-linked. Expressed in goblet cells of the intestines and colon (at protein level). Expressed abundantly in goblet cells of intestine and colon, and at low levels in stomach. No expression in brain, lung, spleen, kidney, uterus, pancreas, liver, heart or thymus.

Its subcellular location is the secreted. The protein resides in the extracellular space. It localises to the extracellular matrix. The protein localises to the cytoplasm. Involved in the maintenance and repair of the intestinal mucosa. Promotes the mobility of epithelial cells in healing processes (motogen). The protein is Trefoil factor 3 (Tff3) of Mus musculus (Mouse).